The sequence spans 180 residues: ATP synthase subunit delta, chloroplastic (180 aa).

The protein belongs to the ATPase delta chain family. F-type ATPases have 2 components, F(1) - the catalytic core - and F(0) - the membrane proton channel. F(1) has five subunits: alpha(3), beta(3), gamma(1), delta(1), epsilon(1). CF(0) has four main subunits: a(1), b(1), b'(1) and c(10-14). The alpha and beta chains form an alternating ring which encloses part of the gamma chain. F(1) is attached to F(0) by a central stalk formed by the gamma and epsilon chains, while a peripheral stalk is formed by the delta, b and b' chains.

The protein localises to the plastid. Its subcellular location is the chloroplast thylakoid membrane. F(1)F(0) ATP synthase produces ATP from ADP in the presence of a proton or sodium gradient. F-type ATPases consist of two structural domains, F(1) containing the extramembraneous catalytic core and F(0) containing the membrane proton channel, linked together by a central stalk and a peripheral stalk. During catalysis, ATP synthesis in the catalytic domain of F(1) is coupled via a rotary mechanism of the central stalk subunits to proton translocation. Its function is as follows. This protein is part of the stalk that links CF(0) to CF(1). It either transmits conformational changes from CF(0) to CF(1) or is implicated in proton conduction. This Rhodomonas salina (Cryptomonas salina) protein is ATP synthase subunit delta, chloroplastic.